The chain runs to 289 residues: Serine/threonine-protein phosphatase Pgam5, mitochondrial (289 aa).

It belongs to the phosphoglycerate mutase family. BPG-dependent PGAM subfamily. In terms of assembly, interacts with Pk92B/ASK1.

It localises to the mitochondrion outer membrane. The enzyme catalyses O-phospho-L-seryl-[protein] + H2O = L-seryl-[protein] + phosphate. The catalysed reaction is O-phospho-L-threonyl-[protein] + H2O = L-threonyl-[protein] + phosphate. Its function is as follows. Displays phosphatase activity for serine/threonine residues, and dephosphorylates and activates Pk92B kinase. Has apparently no phosphoglycerate mutase activity. The polypeptide is Serine/threonine-protein phosphatase Pgam5, mitochondrial (Drosophila grimshawi (Hawaiian fruit fly)).